The following is a 151-amino-acid chain: MKVILRKDVAALGDAGEVVAVKNGYANNYLIPQGMATRATEGTLKALETEKKQQARKVELQRTSARELAQKIEQMVLKVQAKAGESGKLFGTVTAGDIADALKAVGVEIDRRKITLEAPVKLLGKYEAEAKLFSDVTVKVTFEVEAEGTEA.

It belongs to the bacterial ribosomal protein bL9 family.

Binds to the 23S rRNA. The chain is Large ribosomal subunit protein bL9 from Chlorobium luteolum (strain DSM 273 / BCRC 81028 / 2530) (Pelodictyon luteolum).